A 432-amino-acid chain; its full sequence is UDP-N-acetylglucosamine 1-carboxyvinyltransferase (432 aa).

Lysine 22–asparagine 23 provides a ligand contact to phosphoenolpyruvate. Residue arginine 102 coordinates UDP-N-acetyl-alpha-D-glucosamine. The active-site Proton donor is the cysteine 126. 2-(S-cysteinyl)pyruvic acid O-phosphothioketal is present on cysteine 126. UDP-N-acetyl-alpha-D-glucosamine contacts are provided by residues arginine 131–leucine 135, aspartate 317, and isoleucine 339.

Belongs to the EPSP synthase family. MurA subfamily.

It localises to the cytoplasm. The enzyme catalyses phosphoenolpyruvate + UDP-N-acetyl-alpha-D-glucosamine = UDP-N-acetyl-3-O-(1-carboxyvinyl)-alpha-D-glucosamine + phosphate. It functions in the pathway cell wall biogenesis; peptidoglycan biosynthesis. Its function is as follows. Cell wall formation. Adds enolpyruvyl to UDP-N-acetylglucosamine. This Rhodospirillum centenum (strain ATCC 51521 / SW) protein is UDP-N-acetylglucosamine 1-carboxyvinyltransferase.